Consider the following 299-residue polypeptide: Oxygen-dependent coproporphyrinogen-III oxidase (299 aa).

Position 92 (Ser-92) interacts with substrate. A divalent metal cation contacts are provided by His-96 and His-106. Catalysis depends on His-106, which acts as the Proton donor. 108-110 provides a ligand contact to substrate; sequence NVR. Residues His-145 and His-175 each contribute to the a divalent metal cation site. The interval 240 to 275 is important for dimerization; that stretch reads YVEFNLVWDRGTLFGLQTGGRTESILMSMPPLVRWE. 258–260 contacts substrate; that stretch reads GGR.

Belongs to the aerobic coproporphyrinogen-III oxidase family. In terms of assembly, homodimer. A divalent metal cation is required as a cofactor.

The protein localises to the cytoplasm. It carries out the reaction coproporphyrinogen III + O2 + 2 H(+) = protoporphyrinogen IX + 2 CO2 + 2 H2O. It functions in the pathway porphyrin-containing compound metabolism; protoporphyrin-IX biosynthesis; protoporphyrinogen-IX from coproporphyrinogen-III (O2 route): step 1/1. In terms of biological role, involved in the heme biosynthesis. Catalyzes the aerobic oxidative decarboxylation of propionate groups of rings A and B of coproporphyrinogen-III to yield the vinyl groups in protoporphyrinogen-IX. The polypeptide is Oxygen-dependent coproporphyrinogen-III oxidase (Salmonella newport (strain SL254)).